The following is a 350-amino-acid chain: MSAERLVNPHSDSDDQQVEKSLRPRTLSEFIGQEKVVEQLRIAIAAARGRNEALDHTLFYGPPGLGKTSLANVVANEMGAKIKITSGPAIERAGDLAAILTNLQPNDVLFIDEVHRLNRAVEEVLYPAMEDFALDLVVGKGPGARSLRLNLPRFTVIGATTRLALLTSPLRDRFVAVHRLVFYSDAAMTEIVSRSARILGVPISPEGAREIGRRARGTPRIANRILRRVRDYAQVVANGEITLAVAREALAQLEIDELGLDENDRRLLRAIIELFNGGPVGLNTLAAALAEEVDAIEDVYEPFLLQLGFLQRTPRGRVATRRAYEHLGLPFPERSLPLEDESGPQQGTLF.

A large ATPase domain (RuvB-L) region spans residues 1-183 (MSAERLVNPH…FVAVHRLVFY (183 aa)). ATP contacts are provided by residues L22, R23, G64, K67, T68, S69, 130–132 (EDF), R173, Y183, and R220. A Mg(2+)-binding site is contributed by T68. Positions 184–254 (SDAAMTEIVS…VAREALAQLE (71 aa)) are small ATPAse domain (RuvB-S). A head domain (RuvB-H) region spans residues 257–350 (ELGLDENDRR…ESGPQQGTLF (94 aa)). DNA-binding residues include R312 and R317.

Belongs to the RuvB family. In terms of assembly, homohexamer. Forms an RuvA(8)-RuvB(12)-Holliday junction (HJ) complex. HJ DNA is sandwiched between 2 RuvA tetramers; dsDNA enters through RuvA and exits via RuvB. An RuvB hexamer assembles on each DNA strand where it exits the tetramer. Each RuvB hexamer is contacted by two RuvA subunits (via domain III) on 2 adjacent RuvB subunits; this complex drives branch migration. In the full resolvosome a probable DNA-RuvA(4)-RuvB(12)-RuvC(2) complex forms which resolves the HJ.

Its subcellular location is the cytoplasm. It carries out the reaction ATP + H2O = ADP + phosphate + H(+). The RuvA-RuvB-RuvC complex processes Holliday junction (HJ) DNA during genetic recombination and DNA repair, while the RuvA-RuvB complex plays an important role in the rescue of blocked DNA replication forks via replication fork reversal (RFR). RuvA specifically binds to HJ cruciform DNA, conferring on it an open structure. The RuvB hexamer acts as an ATP-dependent pump, pulling dsDNA into and through the RuvAB complex. RuvB forms 2 homohexamers on either side of HJ DNA bound by 1 or 2 RuvA tetramers; 4 subunits per hexamer contact DNA at a time. Coordinated motions by a converter formed by DNA-disengaged RuvB subunits stimulates ATP hydrolysis and nucleotide exchange. Immobilization of the converter enables RuvB to convert the ATP-contained energy into a lever motion, pulling 2 nucleotides of DNA out of the RuvA tetramer per ATP hydrolyzed, thus driving DNA branch migration. The RuvB motors rotate together with the DNA substrate, which together with the progressing nucleotide cycle form the mechanistic basis for DNA recombination by continuous HJ branch migration. Branch migration allows RuvC to scan DNA until it finds its consensus sequence, where it cleaves and resolves cruciform DNA. This chain is Holliday junction branch migration complex subunit RuvB, found in Chloroflexus aggregans (strain MD-66 / DSM 9485).